The chain runs to 397 residues: Lysophospholipid transporter LplT (397 aa).

Residues 1–17 lie on the Periplasmic side of the membrane; it reads MSESVHTNTSLWSKGMK. The chain crosses the membrane as a helical span at residues 18-38; the sequence is AVIVAQFLSAFGDNALLFATL. The Cytoplasmic portion of the chain corresponds to 39–52; sequence ALLKAQFYPEWSQP. The helical transmembrane segment at 53-73 threads the bilayer; sequence ILQMVFVGAYILFAPFVGQVA. Residues 74 to 90 are Periplasmic-facing; sequence DSFAKGRVMMFANGLKL. A helical membrane pass occupies residues 91-111; that stretch reads LGAASICFGINPFLGYTLVGV. Residues 112-144 are Cytoplasmic-facing; that stretch reads GAAAYSPAKYGILGELTTGSKLVKANGLMEAST. A helical transmembrane segment spans residues 145 to 165; the sequence is IAAILLGSVAGGVLADWHVLV. Position 166 (A166) is a topological domain, periplasmic. A helical membrane pass occupies residues 167 to 187; the sequence is LAACALAYGGAVVANIYIPKL. At 188-226 the chain is on the cytoplasmic side; the sequence is AAARPGQSWNLINMTRSFLNACTSLWRNGETRFSLVGTS. Residues 227-247 form a helical membrane-spanning segment; sequence LFWGAGVTLRFLLVLWVPVAL. Residues 248–256 are Periplasmic-facing; that stretch reads GITDNATPT. The helical transmembrane segment at 257–277 threads the bilayer; sequence YLNAMVAIGIVVGAGAAAKLV. The Cytoplasmic portion of the chain corresponds to 278 to 280; that stretch reads TLE. A helical transmembrane segment spans residues 281–301; that stretch reads TMSRCMPAGILIGVVVLIFSL. The Periplasmic segment spans residues 302-304; the sequence is QHE. A helical membrane pass occupies residues 305-325; the sequence is LLPAYALLMLIGVMGGFFVVP. The Cytoplasmic portion of the chain corresponds to 326–343; sequence LNALLQERGKKSVGAGNA. The chain crosses the membrane as a helical span at residues 344–364; sequence IAVQNLGENSAMLLMLGIYSL. Residues 365-366 lie on the Periplasmic side of the membrane; that stretch reads AV. The helical transmembrane segment at 367–387 threads the bilayer; it reads MVGIPVVPIGIGFGALFALAI. The Cytoplasmic segment spans residues 388–397; sequence TALWIWQRRH.

This sequence belongs to the major facilitator superfamily. LplT (TC 2.A.1.42) family.

It is found in the cell inner membrane. Functionally, catalyzes the facilitated diffusion of 2-acyl-glycero-3-phosphoethanolamine (2-acyl-GPE) into the cell. The chain is Lysophospholipid transporter LplT from Shigella sonnei (strain Ss046).